A 143-amino-acid chain; its full sequence is Hemoglobin subunit alpha (143 aa).

Serine 1 is subject to N-acetylserine. The 143-residue stretch at 1–143 (SLSATDKARV…LALALSEKYR (143 aa)) folds into the Globin domain. Position 60 (histidine 60) interacts with O2. Residue histidine 89 coordinates heme b.

It belongs to the globin family. As to quaternary structure, heterotetramer of two alpha chains and two beta chains. Red blood cells.

Involved in oxygen transport from gills to the various peripheral tissues. This chain is Hemoglobin subunit alpha (hba), found in Leiostomus xanthurus (Spot).